A 200-amino-acid chain; its full sequence is Ubiquitin-conjugating enzyme E2 K (200 aa).

The residue at position 2 (Ala2) is an N-acetylalanine. Residues 4–154 form the UBC core domain; that stretch reads IAVQRIKREF…ARLWAHVYAG (151 aa). N6-acetyllysine; alternate is present on Lys14. Residue Lys14 forms a Glycyl lysine isopeptide (Lys-Gly) (interchain with G-Cter in SUMO); alternate linkage. A Glycyl lysine isopeptide (Lys-Gly) (interchain with G-Cter in SUMO1); alternate cross-link involves residue Lys14. Catalysis depends on Cys92, which acts as the Glycyl thioester intermediate. Ser159 carries the phosphoserine modification. The UBA domain maps to 160-200; that stretch reads PEYTKKIENLCAMGFDRNAVIVALSSKSWDVETATELLLSN.

Belongs to the ubiquitin-conjugating enzyme family. Interacts with RNF138/NARF. Interacts with BRCA1. Post-translationally, sumoylation at Lys-14 impairs catalytic activity.

The protein localises to the cytoplasm. It carries out the reaction S-ubiquitinyl-[E1 ubiquitin-activating enzyme]-L-cysteine + [E2 ubiquitin-conjugating enzyme]-L-cysteine = [E1 ubiquitin-activating enzyme]-L-cysteine + S-ubiquitinyl-[E2 ubiquitin-conjugating enzyme]-L-cysteine.. It functions in the pathway protein modification; protein ubiquitination. Functionally, accepts ubiquitin from the E1 complex and catalyzes its covalent attachment to other proteins. In vitro, in the presence or in the absence of BRCA1-BARD1 E3 ubiquitin-protein ligase complex, catalyzes the synthesis of 'Lys-48'-linked polyubiquitin chains. Does not transfer ubiquitin directly to but elongates monoubiquitinated substrate protein. Mediates the selective degradation of short-lived and abnormal proteins, such as the endoplasmic reticulum-associated degradation (ERAD) of misfolded lumenal proteins. Ubiquitinates huntingtin. May mediate foam cell formation by the suppression of apoptosis of lipid-bearing macrophages through ubiquitination and subsequence degradation of p53/TP53. Proposed to be involved in ubiquitination and proteolytic processing of NF-kappa-B; in vitro supports ubiquitination of NFKB1. The chain is Ubiquitin-conjugating enzyme E2 K (UBE2K) from Bos taurus (Bovine).